Here is a 374-residue protein sequence, read N- to C-terminus: Ribosomal RNA large subunit methyltransferase G (374 aa).

The protein belongs to the methyltransferase superfamily. RlmG family.

It localises to the cytoplasm. It carries out the reaction guanosine(1835) in 23S rRNA + S-adenosyl-L-methionine = N(2)-methylguanosine(1835) in 23S rRNA + S-adenosyl-L-homocysteine + H(+). In terms of biological role, specifically methylates the guanine in position 1835 (m2G1835) of 23S rRNA. This Pseudomonas savastanoi pv. phaseolicola (strain 1448A / Race 6) (Pseudomonas syringae pv. phaseolicola (strain 1448A / Race 6)) protein is Ribosomal RNA large subunit methyltransferase G.